Reading from the N-terminus, the 291-residue chain is ATP synthase gamma chain (291 aa).

Belongs to the ATPase gamma chain family. As to quaternary structure, F-type ATPases have 2 components, CF(1) - the catalytic core - and CF(0) - the membrane proton channel. CF(1) has five subunits: alpha(3), beta(3), gamma(1), delta(1), epsilon(1). CF(0) has three main subunits: a, b and c.

It localises to the cell membrane. Functionally, produces ATP from ADP in the presence of a proton gradient across the membrane. The gamma chain is believed to be important in regulating ATPase activity and the flow of protons through the CF(0) complex. The sequence is that of ATP synthase gamma chain from Lachnoclostridium phytofermentans (strain ATCC 700394 / DSM 18823 / ISDg) (Clostridium phytofermentans).